A 662-amino-acid polypeptide reads, in one-letter code: Glycogen debranching enzyme (662 aa).

Residue Asp-338 is the Nucleophile of the active site. Glu-373 functions as the Proton donor in the catalytic mechanism.

The protein belongs to the glycosyl hydrolase 13 family.

It carries out the reaction Hydrolysis of (1-&gt;6)-alpha-D-glucosidic linkages to branches with degrees of polymerization of three or four glucose residues in limit dextrin.. Its pathway is glycan degradation; glycogen degradation. Functionally, removes maltotriose and maltotetraose chains that are attached by 1,6-alpha-linkage to the limit dextrin main chain, generating a debranched limit dextrin. The sequence is that of Glycogen debranching enzyme from Yersinia pseudotuberculosis serotype IB (strain PB1/+).